Here is a 149-residue protein sequence, read N- to C-terminus: Glucosamine 6-phosphate N-acetyltransferase (149 aa).

Residues 5 to 149 (FKIRKLEISD…KSIQMSKYFD (145 aa)) enclose the N-acetyltransferase domain. Residues T27, 75 to 78 (KFLR), and 87 to 89 (EDV) each bind substrate. 97–102 (GKQLGK) is a binding site for acetyl-CoA. 118–119 (YK) is a binding site for substrate. 132-134 (YEK) is an acetyl-CoA binding site.

Belongs to the acetyltransferase family. GNA1 subfamily. Homodimer. In terms of tissue distribution, expressed in roots, leaves, stems, cauline leaves, flowers and siliques.

It localises to the endoplasmic reticulum membrane. The catalysed reaction is D-glucosamine 6-phosphate + acetyl-CoA = N-acetyl-D-glucosamine 6-phosphate + CoA + H(+). It functions in the pathway nucleotide-sugar biosynthesis; UDP-N-acetyl-alpha-D-glucosamine biosynthesis; N-acetyl-alpha-D-glucosamine 1-phosphate from alpha-D-glucosamine 6-phosphate (route I): step 1/2. Functionally, acetyltransferase involved in UDP-N-acetylglucosamine (UDP-GlcNAc) biosynthesis. UDP-GlcNAc is an essential metabolite that serves as an initial sugar donor for N-glycan synthesis and thus plays an important role in protein and lipid glycosylation. This Arabidopsis thaliana (Mouse-ear cress) protein is Glucosamine 6-phosphate N-acetyltransferase (GNA1).